The sequence spans 115 residues: MAVTLDRAVEASEIVDALKPFGVTQVDVAAVIQVSDRAVRGWRTGDIRPERYDRLAQLRDLVLLLSDSLTPRGVGQWLHAKNRLLDGQRPVDLLAKDRYEDVRSAAESFIDGAYV.

This sequence belongs to the MbcA/ParS/Xre antitoxin family. In terms of assembly, forms a heterotetramer with cognate toxin Rv3189.

Its function is as follows. Probable antitoxin component of a type II toxin-antitoxin (TA) system. Neutralizes the activity of cognate toxin Rv3189 by blocking access to the toxin active site. The polypeptide is Probable mycobacterial cidal antitoxin Rv3188 (Mycobacterium tuberculosis (strain ATCC 25618 / H37Rv)).